Consider the following 173-residue polypeptide: Transcription factor E (173 aa).

Residues 9-92 (ADKAIFAYLH…LWELELDNMY (84 aa)) enclose the HTH TFE/IIEalpha-type domain.

Belongs to the TFE family. Monomer. Interaction with RNA polymerase subunits RpoF and RpoE is necessary for Tfe stimulatory transcription activity. Able to interact with Tbp and RNA polymerase in the absence of DNA promoter. Interacts both with the preinitiation and elongation complexes.

In terms of biological role, transcription factor that plays a role in the activation of archaeal genes transcribed by RNA polymerase. Facilitates transcription initiation by enhancing TATA-box recognition by TATA-box-binding protein (Tbp), and transcription factor B (Tfb) and RNA polymerase recruitment. Not absolutely required for transcription in vitro, but particularly important in cases where Tbp or Tfb function is not optimal. It dynamically alters the nucleic acid-binding properties of RNA polymerases by stabilizing the initiation complex and destabilizing elongation complexes. Seems to translocate with the RNA polymerase following initiation and acts by binding to the non template strand of the transcription bubble in elongation complexes. The chain is Transcription factor E from Methanospirillum hungatei JF-1 (strain ATCC 27890 / DSM 864 / NBRC 100397 / JF-1).